The primary structure comprises 218 residues: Peptide methionine sulfoxide reductase MsrA (218 aa).

C57 is a catalytic residue.

Belongs to the MsrA Met sulfoxide reductase family.

The catalysed reaction is L-methionyl-[protein] + [thioredoxin]-disulfide + H2O = L-methionyl-(S)-S-oxide-[protein] + [thioredoxin]-dithiol. It carries out the reaction [thioredoxin]-disulfide + L-methionine + H2O = L-methionine (S)-S-oxide + [thioredoxin]-dithiol. Has an important function as a repair enzyme for proteins that have been inactivated by oxidation. Catalyzes the reversible oxidation-reduction of methionine sulfoxide in proteins to methionine. The chain is Peptide methionine sulfoxide reductase MsrA from Brucella suis biovar 1 (strain 1330).